Consider the following 376-residue polypeptide: Putative F-box protein At3g18330 (376 aa).

In terms of domain architecture, F-box spans 1-46 (MPMPNLPKELVEEILSFVPATYLKRLSATCKPWNRLIHNDKRFARK).

This is Putative F-box protein At3g18330 from Arabidopsis thaliana (Mouse-ear cress).